The chain runs to 530 residues: MSDLDLSQYGITPDTTLRNADPARLYEEAIHYDPTAAIAHSGALTIRSGEKTGRSPADKRIVRHPNSEDDIWWGPINMEIDDHTFEINKERAQDYLNTRQRIYVMDGFAGWDPAHRLKVRIICSRPYHALFMHNMLIRPSQEELASFGEPDFVIYNAGEFPANRQTKHMSSKTSVDLSFENQEMVILGTEYAGEMKKGVFTVMHYLMPKKDVLSMHCSANEGDEGDVSLFFGLSGTGKTTLSADPNRKLIGDDEHCWSDDGVFNIEGGCYAKAVGLSEEEEPEIYNAIRYGTVLENMVYDEDTRAVDYDDTSITQNTRASYPLDYIDRAKIPGMGGHPDNIIFLTYDAFGVMPPVSKLTPEQAMYHFISGYTAKVAGTEVGVDEPQATFSACFGAAFLVWPPDKYAEMLAEKIRAHDAEAWLVNTGITGGPYGVGHRVPLEHTRAMIDAIHDGSLLDAPKKTEPVFGLDVPTECPNVPNDILMPRETWDDPQAYDEKAEHLVGLFHDHFEKYEDEAAPAIAEAGPQLQAA.

Arginine 54, tyrosine 191, and lysine 197 together coordinate substrate. ATP-binding positions include lysine 197, histidine 216, and 232–240 (GLSGTGKTT). 2 residues coordinate Mn(2+): lysine 197 and histidine 216. Aspartate 253 contributes to the Mn(2+) binding site. ATP is bound by residues glutamate 281, arginine 318, 437-438 (RV), and threonine 443. Residue arginine 318 coordinates substrate.

The protein belongs to the phosphoenolpyruvate carboxykinase (ATP) family. It depends on Mn(2+) as a cofactor.

The protein localises to the cytoplasm. The enzyme catalyses oxaloacetate + ATP = phosphoenolpyruvate + ADP + CO2. It functions in the pathway carbohydrate biosynthesis; gluconeogenesis. Involved in the gluconeogenesis. Catalyzes the conversion of oxaloacetate (OAA) to phosphoenolpyruvate (PEP) through direct phosphoryl transfer between the nucleoside triphosphate and OAA. The chain is Phosphoenolpyruvate carboxykinase (ATP) 2 from Salinibacter ruber (strain DSM 13855 / M31).